The following is a 571-amino-acid chain: Urease subunit alpha (571 aa).

A Urease domain is found at 133–571 (GGIDTHVHFI…LPLTQRYFLF (439 aa)). Residues histidine 138, histidine 140, and lysine 221 each contribute to the Ni(2+) site. Position 221 is an N6-carboxylysine (lysine 221). Residue histidine 223 coordinates substrate. Histidine 250 and histidine 276 together coordinate Ni(2+). The active-site Proton donor is histidine 324. Residue aspartate 364 coordinates Ni(2+).

The protein belongs to the metallo-dependent hydrolases superfamily. Urease alpha subunit family. Heterotrimer of UreA (gamma), UreB (beta) and UreC (alpha) subunits. Three heterotrimers associate to form the active enzyme. Ni cation serves as cofactor. In terms of processing, carboxylation allows a single lysine to coordinate two nickel ions.

It is found in the cytoplasm. The catalysed reaction is urea + 2 H2O + H(+) = hydrogencarbonate + 2 NH4(+). It functions in the pathway nitrogen metabolism; urea degradation; CO(2) and NH(3) from urea (urease route): step 1/1. In Staphylococcus aureus (strain MRSA252), this protein is Urease subunit alpha.